The chain runs to 158 residues: UPF0262 protein RHOS4_22360 (158 aa).

The protein belongs to the UPF0262 family.

This Cereibacter sphaeroides (strain ATCC 17023 / DSM 158 / JCM 6121 / CCUG 31486 / LMG 2827 / NBRC 12203 / NCIMB 8253 / ATH 2.4.1.) (Rhodobacter sphaeroides) protein is UPF0262 protein RHOS4_22360.